The following is a 345-amino-acid chain: UDP-N-acetylenolpyruvoylglucosamine reductase (345 aa).

The FAD-binding PCMH-type domain occupies 15 to 218; sequence VDVYAEKVII…NTIIFLRYKK (204 aa). Residue arginine 161 is part of the active site. The active-site Proton donor is the serine 230. Glutamate 327 is an active-site residue.

The protein belongs to the MurB family. FAD serves as cofactor.

The protein localises to the cytoplasm. It carries out the reaction UDP-N-acetyl-alpha-D-muramate + NADP(+) = UDP-N-acetyl-3-O-(1-carboxyvinyl)-alpha-D-glucosamine + NADPH + H(+). Its pathway is cell wall biogenesis; peptidoglycan biosynthesis. Cell wall formation. The protein is UDP-N-acetylenolpyruvoylglucosamine reductase of Blochmanniella floridana.